The primary structure comprises 569 residues: MDQSGVLLWVKAEPFIVGALQEPPPSKLSLHYLKKVAAYVRTRATERAYPRLYWPTWRHIACGKLQLAKDLAWLYFEIFDNLSERTPEERLEWSEILSNCTTKDEVEKQRNQLSVDTLQFLLFLYIQQLNKISLRTSFIGEEWPSPRNRPKSPSPAERSSCHNKNWNDYNHQAFVCDHLSELLELLLDPEQLTESFHSTQSSLLSREAVTALSFLIEGTVSRTKKVYPLHELALWQPLHAANGFSKISKTFSLYKLEAWLRACLTTNPFGLSACLQSGKKLAWAHKVEGATKRAKIACNAHMAPRSHRIVVMSQVCNQTLAKSSETLVGAHVRAHRCNESFIYLLSPLRSMTIEKCRNSTFVLGPVETALHLHGCENLKVIAVCHRLSVSSTIGCTFHIMTPSRPLILSGNQTVTFAPFHTHYPMLEDHMARTGLATVPNYWDDPMVLGGEGTDTRVFQLLPPSEFYVFVTPFEMEGDTAEIPGGLPPAYQKALAHREQRIHNWQKTVKEARLTKEQRKQFQVLVENKFYEWLVSTGHRQQLDSLVPPPAASNQVAKKDLTWSHGALET.

The 132-residue stretch at 304–435 (PRSHRIVVMS…LEDHMARTGL (132 aa)) folds into the C-CAP/cofactor C-like domain.

Belongs to the TBCC family.

It is found in the cytoplasm. It localises to the cytoskeleton. The protein localises to the microtubule organizing center. Its subcellular location is the centrosome. The protein resides in the spindle pole. Plays a role in the regulation of centrosome and Golgi apparatus positioning, with consequences on cell shape and cell migration. The sequence is that of TBCC domain-containing protein 1 (Tbccd1) from Rattus norvegicus (Rat).